A 37-amino-acid polypeptide reads, in one-letter code: Mu-agatoxin-Aa1b (37 aa).

4 disulfides stabilise this stretch: Cys-2/Cys-18, Cys-9/Cys-23, Cys-17/Cys-33, and Cys-25/Cys-31. A Serine amide modification is found at Ser-37.

It belongs to the neurotoxin 07 (Beta/delta-agtx) family. 01 (aga-2) subfamily. In terms of tissue distribution, expressed by the venom gland.

It is found in the secreted. Its function is as follows. Insecticidal neurotoxin that induces an irreversible spastic paralysis when injected into insects. Modifies presynaptic voltage-gated sodium channels (Nav), causing them to open at the normal resting potential of the nerve. This leads to spontaneous release of neurotransmitter and repetitive action potentials in motor neurons. The sequence is that of Mu-agatoxin-Aa1b from Agelenopsis aperta (North American funnel-web spider).